The primary structure comprises 244 residues: T-cell immunoreceptor with Ig and ITIM domains (244 aa).

A signal peptide spans 1–21; the sequence is MRWCLLLIWAQGLRQAPLASG. Residues 22 to 124 form the Ig-like V-type domain; the sequence is MMTGTIETTG…DGTYTGRIFL (103 aa). The Extracellular segment spans residues 22–141; the sequence is MMTGTIETTG…AEHGARFQIP (120 aa). Residues Asn-32 and Asn-101 are each glycosylated (N-linked (GlcNAc...) asparagine). Residues 32-42 form a homodimerization region; sequence NISAEKGGSII. Cys-45 and Cys-108 are disulfide-bonded. The helical transmembrane segment at 142-162 threads the bilayer; that stretch reads LLGAMAATLVVICTAVIVVVA. Residues 163–244 are Cytoplasmic-facing; sequence LTRKKKALRI…GNCSFFTETG (82 aa). The residue at position 225 (Tyr-225) is a Phosphotyrosine. Residues 229 to 234 carry the ITIM motif motif; the sequence is LSYRSL.

Homodimer in cis; binds with high affinity to PVR, forming a heterotetrameric assembly of two TIGIT and two PVR molecules. Binds with lower affinity to NECTIN2 and NECTIN3. Interacts with GRB2. Interacts with NECTIN4. Expressed at low levels on peripheral memory and regulatory CD4+ T-cells and NK cells and is up-regulated following activation of these cells (at protein level).

The protein localises to the cell membrane. Inhibitory receptor that plays a role in the modulation of immune responses. Suppresses T-cell activation by promoting the generation of mature immunoregulatory dendritic cells. Upon binding to its ligands PVR/CD155 or NECTIN2/CD112, which are expressed on antigen-presenting cells, sends inhibitory signals to the T-cell or NK cell. Mechanistically, interaction with ligand leads to phosphorylation of the cytoplasmic tail by Src family tyrosine kinases such as FYN or LCK, allowing subsequent binding to adapter GRB2 and SHIP1/INPP5D. In turn, inhibits PI3K and MAPK signaling cascades. In addition, associates with beta-arrestin-2/ARRB2 to recruit SHIP1/INPP5D that suppresses autoubiquitination of TRAF6 and subsequently inhibits NF-kappa-B signaling pathway. Also acts as a receptor for NECTIN4 to inhibit NK cell cytotoxicity. The chain is T-cell immunoreceptor with Ig and ITIM domains (TIGIT) from Homo sapiens (Human).